Here is a 471-residue protein sequence, read N- to C-terminus: Putative multidrug resistance protein MdtD (471 aa).

The Periplasmic portion of the chain corresponds to 1 to 11; it reads MTDLPDSTRWQ. Residues 12–32 form a helical membrane-spanning segment; that stretch reads LWIVAFGFFMQSLDTTIVNTA. Topologically, residues 33–48 are cytoplasmic; the sequence is LPSMAQSLGESPLHMH. Residues 49-69 form a helical membrane-spanning segment; it reads MVIVSYVLTVAVMLPASGWLA. Over 70–76 the chain is Periplasmic; that stretch reads DKVGVRN. A helical transmembrane segment spans residues 77 to 97; that stretch reads IFFTAIVLFTLGSLFCALSGT. Residues 98 to 101 are Cytoplasmic-facing; the sequence is LNEL. Residues 102–124 form a helical membrane-spanning segment; sequence LLARALQGVGGAMMVPVGRLTVM. At 125 to 137 the chain is on the periplasmic side; it reads KIVPREQYMAAMT. The helical transmembrane segment at 138 to 158 threads the bilayer; sequence FVTLPGQVGPLLGPALGGLLV. At 159–164 the chain is on the cytoplasmic side; the sequence is EYASWH. The helical transmembrane segment at 165–185 threads the bilayer; that stretch reads WIFLINIPVGIIGAIATLLLM. The Periplasmic segment spans residues 186 to 196; it reads PNYTMQTRRFD. The chain crosses the membrane as a helical span at residues 197–217; the sequence is LSGFLLLAVGMAVLTLALDGS. Residues 218-224 are Cytoplasmic-facing; the sequence is KGTGLSP. The helical transmembrane segment at 225–245 threads the bilayer; that stretch reads LTIAGLVAVGVVALVLYLLHA. At 246-262 the chain is on the periplasmic side; that stretch reads RNNNRALFSLKLFRTRT. A helical transmembrane segment spans residues 263 to 283; that stretch reads FSLGLAGSFAGRIGSGMLPFM. The Cytoplasmic portion of the chain corresponds to 284 to 285; the sequence is TP. The chain crosses the membrane as a helical span at residues 286 to 306; that stretch reads VFLQIGLGFSPFHAGLMMIPM. Residues 307–341 are Periplasmic-facing; that stretch reads VLGSMGMKRIVVQVVNRFGYRRVLVATTLGLSLVT. A helical membrane pass occupies residues 342–362; the sequence is LLFMTTALLGWYYVLPFVLFL. Over 363-395 the chain is Cytoplasmic; that stretch reads QGMVNSTRFSSMNTLTLKDLPDNLASSGNSLLS. Residues 396–416 form a helical membrane-spanning segment; it reads MIMQLSMSIGVTIAGLLLGLF. Over 417–430 the chain is Periplasmic; the sequence is GSQHVSVDSGTTQT. The chain crosses the membrane as a helical span at residues 431-451; the sequence is VFMYTWLSMALIIALPAFIFA. At 452–471 the chain is on the cytoplasmic side; it reads RVPNDTHQNVAISRRKRSAQ.

The protein belongs to the major facilitator superfamily. TCR/Tet family.

The protein resides in the cell inner membrane. The sequence is that of Putative multidrug resistance protein MdtD from Escherichia coli (strain K12 / MC4100 / BW2952).